Consider the following 545-residue polypeptide: T-complex protein 1 subunit gamma (545 aa).

Met-1 carries the N-acetylmethionine modification. The tract at residues 1–24 (MMGHRPVLVLSQNTKRESGRKVQS) is disordered. Position 11 is a phosphoserine (Ser-11). Residue Lys-15 forms a Glycyl lysine isopeptide (Lys-Gly) (interchain with G-Cter in SUMO2) linkage. Position 42 (Gly-42) interacts with ADP. Gly-42 contributes to the ATP binding site. Residue Asp-93 participates in Mg(2+) binding. ADP-binding residues include Gly-94, Thr-95, Thr-96, Ser-97, Thr-162, and Lys-163. Gly-94, Thr-95, and Thr-96 together coordinate ATP. Ser-170 is subject to Phosphoserine. Lys-222 carries the post-translational modification N6-acetyllysine. Ser-243 and Ser-244 each carry phosphoserine. Position 247 is a phosphotyrosine (Tyr-247). Residues Lys-248 and Lys-249 each participate in a glycyl lysine isopeptide (Lys-Gly) (interchain with G-Cter in SUMO2) cross-link. The residue at position 252 (Ser-252) is a Phosphoserine. A disulfide bridge connects residues Cys-366 and Cys-372. Residue Lys-381 forms a Glycyl lysine isopeptide (Lys-Gly) (interchain with G-Cter in SUMO2) linkage. An ADP-binding site is contributed by Gly-411. Gly-411 serves as a coordination point for ATP. Thr-430 and Thr-459 each carry phosphothreonine. ADP contacts are provided by Gly-482, Glu-483, Glu-497, and Lys-502. Gly-482 contributes to the ATP binding site. Position 497 (Glu-497) interacts with ATP. Residues 526 to 545 (HKKKGDDQNRQTGAPDAGQE) are disordered.

This sequence belongs to the TCP-1 chaperonin family. As to quaternary structure, component of the chaperonin-containing T-complex (TRiC), a hexadecamer composed of two identical back-to-back stacked rings enclosing a protein folding chamber. Each ring is made up of eight different subunits: TCP1/CCT1, CCT2, CCT3, CCT4, CCT5, CCT6A/CCT6, CCT7, CCT8. Interacts with PACRG. Interacts with DNAAF4. Interacts with DLEC1.

The protein resides in the cytoplasm. The catalysed reaction is ATP + H2O = ADP + phosphate + H(+). Component of the chaperonin-containing T-complex (TRiC), a molecular chaperone complex that assists the folding of actin, tubulin and other proteins upon ATP hydrolysis. The TRiC complex mediates the folding of WRAP53/TCAB1, thereby regulating telomere maintenance. As part of the TRiC complex may play a role in the assembly of BBSome, a complex involved in ciliogenesis regulating transports vesicles to the cilia. In Rattus norvegicus (Rat), this protein is T-complex protein 1 subunit gamma (Cct3).